The primary structure comprises 751 residues: Glutamate carboxypeptidase 2 (751 aa).

The Cytoplasmic segment spans residues methionine 1 to arginine 19. Serine 10 is subject to Phosphoserine. A helical; Signal-anchor for type II membrane protein membrane pass occupies residues tryptophan 20–isoleucine 43. At lysine 44–valine 750 the chain is on the extracellular side. Asparagine 51, asparagine 77, asparagine 122, asparagine 141, asparagine 154, and asparagine 196 each carry an N-linked (GlcNAc...) asparagine glycan. Residues arginine 211 and asparagine 258 each coordinate substrate. Residues threonine 270 and tyrosine 273 each contribute to the Ca(2+) site. Residues alanine 275–leucine 588 form an NAALADase region. Asparagine 337 is a glycosylation site (N-linked (GlcNAc...) asparagine). Positions 378 and 388 each coordinate Zn(2+). Glutamate 425 contacts substrate. Glutamate 425 (nucleophile; for NAALADase activity) is an active-site residue. Glutamate 426 provides a ligand contact to Zn(2+). Ca(2+) contacts are provided by glutamate 434 and glutamate 437. Aspartate 454 contacts Zn(2+). 2 N-linked (GlcNAc...) asparagine glycosylation sites follow: asparagine 460 and asparagine 477. Substrate is bound by residues serine 518–glycine 519, asparagine 520, arginine 535–arginine 537, tyrosine 553, and tyrosine 553–histidine 554. Histidine 554 lines the Zn(2+) pocket. N-linked (GlcNAc...) asparagine glycosylation occurs at asparagine 614. Serine 629 serves as the catalytic Charge relay system. N-linked (GlcNAc...) asparagine glycosylation is found at asparagine 639 and asparagine 646. Catalysis depends on charge relay system residues aspartate 667 and histidine 690. Substrate is bound at residue lysine 700–tyrosine 701.

It belongs to the peptidase M28 family. M28B subfamily. Homodimer. Requires Zn(2+) as cofactor. High expression in the duodenum and in the jejunum brush-border membrane. Weak expression in kidney.

Its subcellular location is the cell membrane. It carries out the reaction Release of an unsubstituted, C-terminal glutamyl residue, typically from Ac-Asp-Glu or folylpoly-gamma-glutamates.. With respect to regulation, the NAALADase activity is inhibited by quisqualic acid, beta-NAAG and 2-(phosphonomethyl) pentanedioic acid (PMPA). Ethanol ingestion decreases the folate hydrolase activity by 50%. In terms of biological role, has both folate hydrolase and N-acetylated-alpha-linked-acidic dipeptidase (NAALADase) activity. Has a preference for tri-alpha-glutamate peptides. In the intestine, required for the uptake of folate. In the brain, modulates excitatory neurotransmission through the hydrolysis of the neuropeptide, N-aceylaspartylglutamate (NAAG), thereby releasing glutamate. Functionally, also exhibits a dipeptidyl-peptidase IV type activity. In vitro, cleaves Gly-Pro-AMC. This is Glutamate carboxypeptidase 2 (FOLH1) from Sus scrofa (Pig).